We begin with the raw amino-acid sequence, 362 residues long: Ribosomal RNA large subunit methyltransferase F (362 aa).

Basic residues predominate over residues 1-28; the sequence is MNTPLKPKHGQKTNRKPKANKPVVKKQQ. A disordered region spans residues 1–40; it reads MNTPLKPKHGQKTNRKPKANKPVVKKQQTKQPPTHKVQGE.

Belongs to the methyltransferase superfamily. METTL16/RlmF family.

Its subcellular location is the cytoplasm. It carries out the reaction adenosine(1618) in 23S rRNA + S-adenosyl-L-methionine = N(6)-methyladenosine(1618) in 23S rRNA + S-adenosyl-L-homocysteine + H(+). Specifically methylates the adenine in position 1618 of 23S rRNA. The sequence is that of Ribosomal RNA large subunit methyltransferase F from Vibrio cholerae serotype O1 (strain M66-2).